The following is a 367-amino-acid chain: Female-specific protein transformer (367 aa).

Residues 86 to 280 are disordered; sequence ESISSKKIKS…HRHHRSQERS (195 aa). Residues 109 to 129 are compositionally biased toward polar residues; sequence VKQNSPDVTQKFTKKYGSSEN. Positions 130–144 are enriched in basic and acidic residues; it reads PDFRRHSSYEKDNYH. A compositionally biased stretch (basic residues) spans 195–223; the sequence is NRRRSSHRSRRGSGSPRSRRYTSRHRRRS. The span at 229–238 shows a compositional bias: basic and acidic residues; sequence TSWKHNPEHR. Basic residues predominate over residues 239 to 257; sequence TSRRSRTRSPRGNRSRRRS.

Functionally, sex differentiation protein controlling female somatic sexual differentiation. May act by promoting the formation of a splicing enhancer complex. This is Female-specific protein transformer from Musca domestica (House fly).